The primary structure comprises 322 residues: Sideroflexin-2 (322 aa).

Met1 is subject to N-acetylmethionine. 5 helical membrane-spanning segments follow: residues 100–122 (MIIT…WQWV), 142–164 (SVRQ…AVGM), 174–192 (LVGR…CVNI), 228–250 (VVIS…MERL), and 265–287 (PLQV…GLFP).

Belongs to the sideroflexin family.

It is found in the mitochondrion inner membrane. It localises to the mitochondrion outer membrane. It catalyses the reaction L-serine(in) = L-serine(out). In terms of biological role, mitochondrial amino-acid transporter that mediates transport of serine into mitochondria. Involved in mitochondrial iron homeostasis by regulating heme biosynthesis. The chain is Sideroflexin-2 from Bos taurus (Bovine).